The following is a 537-amino-acid chain: CTP synthase (537 aa).

The segment at Met1–Ile265 is amidoligase domain. Ser13 contacts CTP. Ser13 is a UTP binding site. ATP-binding positions include Ser14 to Leu19 and Asp71. 2 residues coordinate Mg(2+): Asp71 and Glu139. Residues Asp146–Glu148 and Lys222 contribute to the CTP site. Position 222 (Lys222) interacts with UTP. In terms of domain architecture, Glutamine amidotransferase type-1 spans Arg290 to Cys536. Gly352 serves as a coordination point for L-glutamine. Cys379 (nucleophile; for glutamine hydrolysis) is an active-site residue. L-glutamine is bound by residues Phe380–Gln383, Glu403, and Arg464. Residues His509 and Glu511 contribute to the active site.

The protein belongs to the CTP synthase family. Homotetramer.

The catalysed reaction is UTP + L-glutamine + ATP + H2O = CTP + L-glutamate + ADP + phosphate + 2 H(+). It carries out the reaction L-glutamine + H2O = L-glutamate + NH4(+). The enzyme catalyses UTP + NH4(+) + ATP = CTP + ADP + phosphate + 2 H(+). It functions in the pathway pyrimidine metabolism; CTP biosynthesis via de novo pathway; CTP from UDP: step 2/2. With respect to regulation, allosterically activated by GTP, when glutamine is the substrate; GTP has no effect on the reaction when ammonia is the substrate. The allosteric effector GTP functions by stabilizing the protein conformation that binds the tetrahedral intermediate(s) formed during glutamine hydrolysis. Inhibited by the product CTP, via allosteric rather than competitive inhibition. Its function is as follows. Catalyzes the ATP-dependent amination of UTP to CTP with either L-glutamine or ammonia as the source of nitrogen. Regulates intracellular CTP levels through interactions with the four ribonucleotide triphosphates. The chain is CTP synthase from Rickettsia peacockii (strain Rustic).